The sequence spans 704 residues: Elongation factor G (704 aa).

The tr-type G domain maps to 8–290 (ARYRNIGISA…AVIDYLPSPV (283 aa)). Residues 17 to 24 (AHIDAGKT), 88 to 92 (DTPGH), and 142 to 145 (NKMD) each bind GTP. Residues Lys-504 and Lys-643 each carry the N6-acetyllysine modification.

This sequence belongs to the TRAFAC class translation factor GTPase superfamily. Classic translation factor GTPase family. EF-G/EF-2 subfamily.

It is found in the cytoplasm. Its function is as follows. Catalyzes the GTP-dependent ribosomal translocation step during translation elongation. During this step, the ribosome changes from the pre-translocational (PRE) to the post-translocational (POST) state as the newly formed A-site-bound peptidyl-tRNA and P-site-bound deacylated tRNA move to the P and E sites, respectively. Catalyzes the coordinated movement of the two tRNA molecules, the mRNA and conformational changes in the ribosome. This Shigella flexneri protein is Elongation factor G.